We begin with the raw amino-acid sequence, 1256 residues long: Topoisomerase 1-associated factor 1 (1256 aa).

Positions 26-38 (GFIVSDEENDNLE) are enriched in acidic residues. Disordered stretches follow at residues 26 to 58 (GFIV…VDEY), 695 to 725 (SKKK…RTHA), 1052 to 1121 (SGAE…EAFF), and 1176 to 1256 (SDGV…DEDE). Over residues 39–53 (NENRNERDPDSRNQD) the composition is skewed to basic and acidic residues. A compositionally biased stretch (basic residues) spans 1060-1086 (GKARKRGNKSSSTIKKKSLQSRSRRPP). 2 stretches are compositionally biased toward basic and acidic residues: residues 1097-1110 (ELRK…FVHD) and 1179-1190 (VDTHSHQDDKSQ). Residues 1194–1204 (SENEDSSEEVS) are compositionally biased toward acidic residues. A compositionally biased stretch (low complexity) spans 1222–1231 (DNNVSENYVS).

This sequence belongs to the timeless family. Component of the fork protection complex (FPC) consisting of TOF1 and CSM3.

The protein localises to the nucleus. Forms a fork protection complex (FPC) with CSM3 and which is required for chromosome segregation during meiosis and DNA damage repair. FPC coordinates leading and lagging strand synthesis and moves with the replication fork. FPC stabilizes replication forks in a configuration that is recognized by replication checkpoint sensors. The protein is Topoisomerase 1-associated factor 1 (TOF1) of Scheffersomyces stipitis (strain ATCC 58785 / CBS 6054 / NBRC 10063 / NRRL Y-11545) (Yeast).